We begin with the raw amino-acid sequence, 213 residues long: Na(+)-translocating NADH-quinone reductase subunit D (213 aa).

The next 7 membrane-spanning stretches (helical) occupy residues 14–34 (ALWI…ALAV), 42–62 (LTMG…VSLL), 77–97 (IIIS…FFNI), 101–121 (LSVF…AESM), 131–151 (FLDG…ISII), 154–174 (LFGF…YASA), and 183–203 (LGLM…VWLV).

Belongs to the NqrDE/RnfAE family. In terms of assembly, composed of six subunits; NqrA, NqrB, NqrC, NqrD, NqrE and NqrF.

Its subcellular location is the cell inner membrane. The enzyme catalyses a ubiquinone + n Na(+)(in) + NADH + H(+) = a ubiquinol + n Na(+)(out) + NAD(+). In terms of biological role, NQR complex catalyzes the reduction of ubiquinone-1 to ubiquinol by two successive reactions, coupled with the transport of Na(+) ions from the cytoplasm to the periplasm. NqrA to NqrE are probably involved in the second step, the conversion of ubisemiquinone to ubiquinol. This Chlamydia muridarum (strain MoPn / Nigg) protein is Na(+)-translocating NADH-quinone reductase subunit D.